We begin with the raw amino-acid sequence, 312 residues long: Bark storage protein B (312 aa).

A signal peptide spans 1-24 (MPQQSMQASLRDPIAEIERSNCKI). A glycan (N-linked (GlcNAc...) asparagine) is linked at Asn70.

This sequence to wound-inducible poplar endochitinases. Monomer. Bark tissue.

May play a role in nitrogen storage. The protein is Bark storage protein B (BSP) of Populus deltoides (Eastern poplar).